A 346-amino-acid polypeptide reads, in one-letter code: UDP-N-acetylenolpyruvoylglucosamine reductase (346 aa).

The FAD-binding PCMH-type domain maps to 18–189 (LRAQARAFIA…VSVVFALKTH (172 aa)). Arg-165 is an active-site residue. The active-site Proton donor is Ser-240. The active site involves Glu-336.

Belongs to the MurB family. FAD is required as a cofactor.

It is found in the cytoplasm. The catalysed reaction is UDP-N-acetyl-alpha-D-muramate + NADP(+) = UDP-N-acetyl-3-O-(1-carboxyvinyl)-alpha-D-glucosamine + NADPH + H(+). It functions in the pathway cell wall biogenesis; peptidoglycan biosynthesis. Cell wall formation. This chain is UDP-N-acetylenolpyruvoylglucosamine reductase, found in Neisseria meningitidis serogroup B (strain ATCC BAA-335 / MC58).